A 184-amino-acid chain; its full sequence is Shikimate kinase (184 aa).

20 to 25 (GVGKSR) is a binding site for ATP. Serine 24 lines the Mg(2+) pocket. Substrate contacts are provided by aspartate 42, arginine 66, and glycine 88. Arginine 127 is an ATP binding site. Arginine 146 serves as a coordination point for substrate. Arginine 162 is an ATP binding site.

The protein belongs to the shikimate kinase family. As to quaternary structure, monomer. Mg(2+) is required as a cofactor.

It is found in the cytoplasm. It carries out the reaction shikimate + ATP = 3-phosphoshikimate + ADP + H(+). Its pathway is metabolic intermediate biosynthesis; chorismate biosynthesis; chorismate from D-erythrose 4-phosphate and phosphoenolpyruvate: step 5/7. Its function is as follows. Catalyzes the specific phosphorylation of the 3-hydroxyl group of shikimic acid using ATP as a cosubstrate. This chain is Shikimate kinase, found in Thermus thermophilus (strain ATCC 27634 / DSM 579 / HB8).